A 238-amino-acid polypeptide reads, in one-letter code: Nicotinamide/nicotinic acid mononucleotide adenylyltransferase (238 aa).

NAD(+) is bound by residues serine 29 and phenylalanine 30. Residues histidine 37 and lysine 70 each contribute to the ATP site. Residues threonine 107, glycine 136, aspartate 138, tryptophan 149, arginine 168, and asparagine 199 each contribute to the NAD(+) site. 204-205 is a binding site for ATP; sequence SR.

It belongs to the eukaryotic NMN adenylyltransferase family. The cofactor is a divalent metal cation.

The protein resides in the nucleus. It catalyses the reaction beta-nicotinamide D-ribonucleotide + ATP + H(+) = diphosphate + NAD(+). It carries out the reaction nicotinate beta-D-ribonucleotide + ATP + H(+) = deamido-NAD(+) + diphosphate. The protein operates within cofactor biosynthesis; NAD(+) biosynthesis; deamido-NAD(+) from nicotinate D-ribonucleotide: step 1/1. It participates in cofactor biosynthesis; NAD(+) biosynthesis; NAD(+) from nicotinamide D-ribonucleotide: step 1/1. In terms of biological role, catalyzes the formation of NAD(+) from nicotinamide mononucleotide (NMN) and ATP. Can also use the deamidated form; nicotinic acid mononucleotide (NaMN) as substrate. The sequence is that of Nicotinamide/nicotinic acid mononucleotide adenylyltransferase (NMNAT) from Arabidopsis thaliana (Mouse-ear cress).